A 435-amino-acid chain; its full sequence is Serine--tRNA ligase (435 aa).

Residue 237–239 coordinates L-serine; the sequence is TAE. 268–270 is an ATP binding site; that stretch reads RSE. Glu-291 serves as a coordination point for L-serine. Residue 355-358 participates in ATP binding; that stretch reads EISS. Ser-390 contributes to the L-serine binding site.

The protein belongs to the class-II aminoacyl-tRNA synthetase family. Type-1 seryl-tRNA synthetase subfamily. In terms of assembly, homodimer. The tRNA molecule binds across the dimer.

It localises to the cytoplasm. It carries out the reaction tRNA(Ser) + L-serine + ATP = L-seryl-tRNA(Ser) + AMP + diphosphate + H(+). The catalysed reaction is tRNA(Sec) + L-serine + ATP = L-seryl-tRNA(Sec) + AMP + diphosphate + H(+). It functions in the pathway aminoacyl-tRNA biosynthesis; selenocysteinyl-tRNA(Sec) biosynthesis; L-seryl-tRNA(Sec) from L-serine and tRNA(Sec): step 1/1. Functionally, catalyzes the attachment of serine to tRNA(Ser). Is also able to aminoacylate tRNA(Sec) with serine, to form the misacylated tRNA L-seryl-tRNA(Sec), which will be further converted into selenocysteinyl-tRNA(Sec). This Lactobacillus acidophilus (strain ATCC 700396 / NCK56 / N2 / NCFM) protein is Serine--tRNA ligase.